The sequence spans 194 residues: Lysozyme g (194 aa).

Active-site residues include Glu71 and Asp84.

Belongs to the glycosyl hydrolase 23 family. As to expression, expressed in intestine, liver, spleen, anterior kidney, posterior kidney, heart, gill, muscle and leukocytes.

The enzyme catalyses Hydrolysis of (1-&gt;4)-beta-linkages between N-acetylmuramic acid and N-acetyl-D-glucosamine residues in a peptidoglycan and between N-acetyl-D-glucosamine residues in chitodextrins.. Its function is as follows. Has lytic activity against M.lysodeikticus, V.alginolyticus from Epinephelus fario, V.vulnificus from culture water, A.hydrophila from soft-shell turtle, A.hydrophila from goldfish and V.parahaemolyticus, P.fluorescens and V.fluvialis from culture water. The polypeptide is Lysozyme g (Epinephelus coioides (Orange-spotted grouper)).